Reading from the N-terminus, the 659-residue chain is L-type lectin-domain containing receptor kinase V.7 (659 aa).

A signal peptide spans 1–25; the sequence is MSHKVLQIVLVLLLTLFSSTHNSNG. The interval 22 to 244 is legume-lectin like; sequence NSNGNFLMEE…GALYYVMQFS (223 aa). Topologically, residues 26 to 275 are extracellular; the sequence is NFLMEEAAAA…PKKSYDRTRR (250 aa). 4 N-linked (GlcNAc...) asparagine glycosylation sites follow: Asn-45, Asn-64, Asn-110, and Asn-192. The chain crosses the membrane as a helical span at residues 276 to 296; it reads ILAVCLTLAVFTALVASGIGF. The Cytoplasmic portion of the chain corresponds to 297–659; that stretch reads VFYVRHKKVK…LTNSFVSHGR (363 aa). In terms of domain architecture, Protein kinase spans 333–595; it reads FKEKQLLGKG…GLLCAHHTEL (263 aa). Residues 339–347 and Lys-362 each bind ATP; that span reads LGKGGFGQV. Catalysis depends on Asp-462, which acts as the Proton acceptor.

It in the C-terminal section; belongs to the protein kinase superfamily. Ser/Thr protein kinase family. In the N-terminal section; belongs to the leguminous lectin family.

The protein resides in the cell membrane. It carries out the reaction L-seryl-[protein] + ATP = O-phospho-L-seryl-[protein] + ADP + H(+). The enzyme catalyses L-threonyl-[protein] + ATP = O-phospho-L-threonyl-[protein] + ADP + H(+). Its function is as follows. Involved in resistance response to the pathogenic oomycetes Phytophthora infestans and Phytophthora capsici and to the pathogenic bacteria Pseudomonas syringae. This Arabidopsis thaliana (Mouse-ear cress) protein is L-type lectin-domain containing receptor kinase V.7.